The primary structure comprises 183 residues: MKKKTSLSEEDQALFRQLMVGTRKIKQDTIVHRPLRKKITEVPTRRLIQEQADASHYFSDEFQPLLNTEGPVKYVREDVSHFELKKMRRGDYSPELFLDLHGLTQLQAKQELGALIAACRREHIFCACVMHGHGKHILKQQTPLWLAQHPHVMAFHQAPKEYGGDAALLVLIEVEEWQPPELP.

Residues 98 to 173 (LDLHGLTQLQ…GDAALLVLIE (76 aa)) enclose the Smr domain.

Belongs to the SmrB family. In terms of assembly, associates with collided ribosomes, but not with correctly translating polysomes.

Its function is as follows. Acts as a ribosome collision sensor. Detects stalled/collided disomes (pairs of ribosomes where the leading ribosome is stalled and a second ribosome has collided with it) and endonucleolytically cleaves mRNA at the 5' boundary of the stalled ribosome. Stalled/collided disomes form a new interface (primarily via the 30S subunits) that binds SmrB. Cleaved mRNA becomes available for tmRNA ligation, leading to ribosomal subunit dissociation and rescue of stalled ribosomes. This is Ribosome rescue factor SmrB from Salmonella agona (strain SL483).